We begin with the raw amino-acid sequence, 392 residues long: Succinate--CoA ligase [ADP-forming] subunit beta (392 aa).

The ATP-grasp domain maps to 9 to 236 (RDLFERHGLP…QAAVDPLEQA (228 aa)). ATP-binding positions include Lys45, 52 to 54 (GRG), Ala94, and Glu99. Mg(2+)-binding residues include Asn191 and Asp205. Residues Asn256 and 318–320 (GIT) contribute to the substrate site.

The protein belongs to the succinate/malate CoA ligase beta subunit family. In terms of assembly, heterotetramer of two alpha and two beta subunits. Mg(2+) serves as cofactor.

The enzyme catalyses succinate + ATP + CoA = succinyl-CoA + ADP + phosphate. It catalyses the reaction GTP + succinate + CoA = succinyl-CoA + GDP + phosphate. The protein operates within carbohydrate metabolism; tricarboxylic acid cycle; succinate from succinyl-CoA (ligase route): step 1/1. Its function is as follows. Succinyl-CoA synthetase functions in the citric acid cycle (TCA), coupling the hydrolysis of succinyl-CoA to the synthesis of either ATP or GTP and thus represents the only step of substrate-level phosphorylation in the TCA. The beta subunit provides nucleotide specificity of the enzyme and binds the substrate succinate, while the binding sites for coenzyme A and phosphate are found in the alpha subunit. This chain is Succinate--CoA ligase [ADP-forming] subunit beta, found in Salinispora arenicola (strain CNS-205).